The sequence spans 201 residues: Small ribosomal subunit protein uS4 (201 aa).

The region spanning 91–151 is the S4 RNA-binding domain; that stretch reads ARLDNVIYRA…DRSRSMLWFD (61 aa).

Belongs to the universal ribosomal protein uS4 family. In terms of assembly, part of the 30S ribosomal subunit. Contacts protein S5. The interaction surface between S4 and S5 is involved in control of translational fidelity.

Functionally, one of the primary rRNA binding proteins, it binds directly to 16S rRNA where it nucleates assembly of the body of the 30S subunit. With S5 and S12 plays an important role in translational accuracy. This Corynebacterium urealyticum (strain ATCC 43042 / DSM 7109) protein is Small ribosomal subunit protein uS4.